The chain runs to 549 residues: MSQSQVPSRAGHYNMTALANALPQANYRQAPWNNGSQMRYNPAGASPNVVGQTQSSPQYNGQPGMGSMPNQGYYMPQQQQQQQQMPQYYGGPMSPSQPQPNMSSRPNVPFYGNQVMSNHQAHPSMGYYYAQVPAYALQGHPPHQAPVDSQSNVVRGPPRKPRQSGHAIWIGNLPSQTDLMSLVHHVCREAQGLESLFLISKSNCAFANFRDEASCLTAQQKLHESKFQSVRLVSRLRKNTVEGASGITAPTGPSATTPQQAVAPEVKEIEQIDSTETQSDNADTDTPTAVGTPDAKGPAVVDAAQKDRFFVLKSLTVEDLDLSVRTGIWATQSHNEEALNSAFKNAENVYLVFSANKSGEYFGYARMVSTINEDPAAAIEFAPKAQSVNEVDLPREIPTEPTKFTPKGRIIDDSARGTIFWEIAREDSSEGVTQEEPAPAVAEQDDTTGGLDGNSENKTWGKPFKLEWLSTTRLPFYRCRGLRNPWNSNREVKIARDGTELEPSVGRRLIGLFNRSHNSPGPRGPMMGMGQMMSPSQQQMPMGYPPPYS.

Disordered regions lie at residues 29-102, 139-165, 243-262, 273-298, and 425-458; these read QAPW…QPNM, GHPPHQAPVDSQSNVVRGPPRKPRQSG, GASGITAPTGPSATTPQQAV, DSTETQSDNADTDTPTAVGTPDAKGP, and REDSSEGVTQEEPAPAVAEQDDTTGGLDGNSENK. Residues 49–61 show a composition bias toward polar residues; that stretch reads VVGQTQSSPQYNG. Positions 71–102 are enriched in low complexity; sequence QGYYMPQQQQQQQQMPQYYGGPMSPSQPQPNM. 2 stretches are compositionally biased toward polar residues: residues 251–260 and 273–289; these read TGPSATTPQQ and DSTETQSDNADTDTPTA. In terms of domain architecture, YTH spans 307–513; sequence DRFFVLKSLT…SVGRRLIGLF (207 aa).

This sequence belongs to the YTHDF family. YTHDF1 subfamily.

Its function is as follows. Specifically recognizes and binds N6-methyladenosine (m6A)-containing mRNAs, and regulates their stability. M6A is a modification present at internal sites of mRNAs and some non-coding RNAs and plays a role in mRNA stability and processing. Directly interacts with the acid phosphatase APHA mRNA to increase its stability. This chain is YTH domain-containing family protein 1, found in Cryphonectria parasitica (strain ATCC 38755 / EP155).